We begin with the raw amino-acid sequence, 645 residues long: 1,4-alpha-glucan branching enzyme GlgB (645 aa).

Asp-309 acts as the Nucleophile in catalysis. Glu-352 functions as the Proton donor in the catalytic mechanism. Residues 619 to 645 (VKTRKGSKKQDGSKTKVRSNVTSRGKR) form a disordered region. Polar residues predominate over residues 636–645 (RSNVTSRGKR).

Belongs to the glycosyl hydrolase 13 family. GlgB subfamily. In terms of assembly, monomer.

The enzyme catalyses Transfers a segment of a (1-&gt;4)-alpha-D-glucan chain to a primary hydroxy group in a similar glucan chain.. Its pathway is glycan biosynthesis; glycogen biosynthesis. Its function is as follows. Catalyzes the formation of the alpha-1,6-glucosidic linkages in glycogen by scission of a 1,4-alpha-linked oligosaccharide from growing alpha-1,4-glucan chains and the subsequent attachment of the oligosaccharide to the alpha-1,6 position. In Bacillus cereus (strain B4264), this protein is 1,4-alpha-glucan branching enzyme GlgB.